Here is a 1313-residue protein sequence, read N- to C-terminus: MGNINSIQTKNYIKFEKYYYAGDLNVDNLPHGRGLMLYENGNSFFGHFINGKKHGKGIYIDKNLTKYISKWKYDHISNKVKVKQFDSDIVYLFYYKNGLIDHCKVYEYISNKKKKKKKKNDGILEDSEIQNRSINFEKDNIMIIQNCQEKSIVNKKEEIIDIPNNKYNENDDTDKVDNFSKKINLEQSQNNMLKYKKKKTFDEMNSLNDSIFCSSCESTSKSIGSDYISHFEKKEKQINKQEDELKKSKENYMNHSEYSNSSTNFENNKIKDISDESIMLRLKNIINNNTDLKIENYELWNKEQVAQWLSLCNVPMKWALSVYKNNINGQRLNNLNLYFIRNKLGILSYGQAIKFLQLIKNLRVTAYNTRFSNTLNLEEYEIYLKKKMKKKKMRENKDGEYTATTSSQAEDFQKNNQKIIMNQIKSMIDQKNDDDKSFSDKIKNGFFKGNTNIRNLQNLVINSIWNKSKDEFKIPIDENNVPMNIEKGKELNTNDQITGKKKKKLKNKYINHIQKNISMLKKLNNASNESQSSNESVTQILSTSSESSFANIHSGLSSKMLFHDKLEPEPIKPNKEKEENNPNLSPIINSKNETNLLNDSNPTKLQDELPKSPCSIDSESSSEKSSETSSETSSFCSEHSEFANFHNNNKIVKYSNNIYINSSLAFSYIYSFIIPPENLTFLYQIRNYYVRDVENDLNPNNELDFCDSFNFYKNCEIIKNRIINPGIRNCSYASNHSKFQQNKNRKYFNYSDCKNERKKTKPQKMKSRVFRGRYMGKDVAIKVLVGNIKNFTKFHKVLYKLYILRHTNIALIMGVSISYPFVFIIYEYIKNLCLFSYLHCVKYKHIYVSKLLKYYQKKFINQNFQQQNNTMSSDRKYISNDDNEKINFDSRNILRNKLLEIKCKNNAKNKITEKNNLKDEQIYSSSTSIKSLDTSSSNMNNTKLKNINFNKNRYINKIHSMFRNKNNILCGNYYYLFRKKKNNISISHEHKNSDRTIFTNESQNLLKNKISQKKINKKLNFKAKIKINRPYAFPPLQEDFNFYLEKKKKKKKILFSYLKTHSYFKSKKCDSRKNKLSDHQIMKIIMDITLACSYLEKQKVRWINLKPTNILLDGSLNAKISDFGIKEIEQCLDINIDYSYIVFPNNVIKFNNKHFKNKIKKIKIVNKGSEDMLHVFSSKNHIYKYNTREINVSSNTHNSSVFFWTSPEILKGKQSPSLYSDVYAYGIILWELMTNSVPFNYRFKSHLLASVGYAKESLPFQNIPPFIKNLIKSCINRNKYKRPTFDRILIEISMIYEQINPKEEDALMSFMDG.

2 MORN repeats span residues 20–42 (YAGDLNVDNLPHGRGLMLYENGN) and 45–63 (FGHFINGKKHGKGIYIDKN). N-linked (GlcNAc...) asparagine glycans are attached at residues asparagine 63, asparagine 131, asparagine 178, asparagine 208, asparagine 254, asparagine 260, and asparagine 288. One can recognise an SAM domain in the interval 300–365 (WNKEQVAQWL…LQLIKNLRVT (66 aa)). N-linked (GlcNAc...) asparagine glycosylation is found at asparagine 466, asparagine 516, asparagine 525, asparagine 528, and asparagine 534. The segment covering 569–580 (EPIKPNKEKEEN) has biased composition (basic and acidic residues). Residues 569–631 (EPIKPNKEKE…SEKSSETSSE (63 aa)) are disordered. Polar residues predominate over residues 586–604 (PIINSKNETNLLNDSNPTK). 7 N-linked (GlcNAc...) asparagine glycosylation sites follow: asparagine 592, asparagine 598, asparagine 661, asparagine 678, asparagine 729, asparagine 735, and asparagine 749. ATP is bound at residue lysine 782. N-linked (GlcNAc...) asparagine glycans are attached at residues asparagine 790, asparagine 868, asparagine 940, asparagine 983, and asparagine 1000. The 333-residue stretch at 962-1294 (FRNKNNILCG…FDRILIEISM (333 aa)) folds into the Protein kinase domain. An RVxF motif motif is present at residues 1052–1055 (KILF). N-linked (GlcNAc...) asparagine glycosylation is found at asparagine 1191 and asparagine 1198.

This sequence belongs to the protein kinase superfamily. TKL Ser/Thr protein kinase family.

It is found in the parasitophorous vacuole. Its subcellular location is the host cell membrane. The protein localises to the host cytoplasm. It localises to the host cytoskeleton. The chain is Inactive protein tyrosine kinase pTKL from Plasmodium berghei (strain Anka).